A 104-amino-acid polypeptide reads, in one-letter code: Translation initiation factor 1A (104 aa).

Low complexity predominate over residues 1 to 14 (MRGQQTPPQQPTRV). Residues 1–20 (MRGQQTPPQQPTRVRTPREN) are disordered. Positions 12 to 87 (TRVRTPRENE…EKCDVIWRYT (76 aa)) constitute an S1-like domain.

This sequence belongs to the eIF-1A family.

Functionally, seems to be required for maximal rate of protein biosynthesis. Enhances ribosome dissociation into subunits and stabilizes the binding of the initiator Met-tRNA(I) to 40 S ribosomal subunits. This Methanococcus maripaludis (strain DSM 14266 / JCM 13030 / NBRC 101832 / S2 / LL) protein is Translation initiation factor 1A.